Reading from the N-terminus, the 151-residue chain is Large ribosomal subunit protein uL15 (151 aa).

A disordered region spans residues 1 to 58 (MELNQLKSVPKARNHKTKTLGRGHGSGLGKTSGRGQKGQKARKSGLTRPGFEGGQTPL). Basic residues predominate over residues 10–21 (PKARNHKTKTLG). A compositionally biased stretch (gly residues) spans 22 to 36 (RGHGSGLGKTSGRGQ).

This sequence belongs to the universal ribosomal protein uL15 family. In terms of assembly, part of the 50S ribosomal subunit.

Functionally, binds to the 23S rRNA. In Mycoplasma pneumoniae (strain ATCC 29342 / M129 / Subtype 1) (Mycoplasmoides pneumoniae), this protein is Large ribosomal subunit protein uL15.